A 109-amino-acid chain; its full sequence is MPIYEFAFIAQQGLTQYELEGLSKGLSALLVKIGAELVKYEYWGLLDFAYSIAKNNKGHYCMMYIRAEPAAMDEFRRRVRLNEDVLRFLCLKVDKVCEGKSAMMGSDQD.

It belongs to the bacterial ribosomal protein bS6 family.

In terms of biological role, binds together with bS18 to 16S ribosomal RNA. In Anaplasma marginale (strain St. Maries), this protein is Small ribosomal subunit protein bS6.